Here is a 99-residue protein sequence, read N- to C-terminus: UPF0473 protein LEUM_0559 (99 aa).

The protein belongs to the UPF0473 family.

The sequence is that of UPF0473 protein LEUM_0559 from Leuconostoc mesenteroides subsp. mesenteroides (strain ATCC 8293 / DSM 20343 / BCRC 11652 / CCM 1803 / JCM 6124 / NCDO 523 / NBRC 100496 / NCIMB 8023 / NCTC 12954 / NRRL B-1118 / 37Y).